Here is a 28-residue protein sequence, read N- to C-terminus: uORF1 protein (28 aa).

The protein resides in the host cytoplasm. The protein localises to the host cytoskeleton. Its function is as follows. Plays a role in the reorganization of host microtubules and intermediate filaments to form a cytoskeletal cage that surrounds the viral factories, protecting the site of viral replication. May play a role in viral infection of human cortical neurons. This Zika virus (isolate ZIKV/Human/French Polynesia/10087PF/2013) (ZIKV) protein is uORF1 protein.